We begin with the raw amino-acid sequence, 279 residues long: Reaction center protein L chain (279 aa).

The next 3 helical transmembrane spans lie at 33–56, 85–113, and 116–141; these read GFFG…GASQ, GLWQ…RKLG, and YHVP…ILMG. Residues H154 and H174 each coordinate (7R,8Z)-bacteriochlorophyll b. The chain crosses the membrane as a helical span at residues 171–200; it reads NPAHMLAITFFFTTTLAMSMHGGLILSAAN. Fe cation is bound at residue H191. Residue F217 participates in a ubiquinone binding. A helical transmembrane segment spans residues 226–252; the sequence is GSLGIHRLGLFLALSAAFWSAVCIVIS. H231 serves as a coordination point for Fe cation.

The protein belongs to the reaction center PufL/M/PsbA/D family. Reaction center is composed of four bacteriochlorophylls, two bacteriopheophytins, two ubiquinones, one iron, and three highly hydrophobic polypeptide chains (designated L, M, and H).

The protein localises to the cell inner membrane. Functionally, the reaction center is a membrane-bound complex that mediates the initial photochemical event in the electron transfer process of photosynthesis. The polypeptide is Reaction center protein L chain (pufL) (Rubrivivax gelatinosus (Rhodocyclus gelatinosus)).